A 602-amino-acid chain; its full sequence is MLTYMEVHLYFTLPVLALLAFLYKPFFTTKDRFKYIFLCTVAFATASPWDNYIVYHKAWSYCPECVTAVIGYVPLEEYMFFIIMTLITVTFTSLTMRWTLPSFFIRPETPVFQSVCVRYIPIVGFLTIAAKAWASSIPDSHPFYGACILWYVCPVLALLWIGSGEYMLRRWKAVLFSIAVPTIFLCWVDQYAIARGTWDISRRTSTGIMVLPSLPLEEFLFFLLIDTVLVFASCATDRAHAIVHIYITPMNHNKVSTWYMDFFYLCWAFLQTDQALSGETLSDLDATWRILREASASFYTASSVFSFEARQDLGVLYGFCRATDDLADNNDVSVPDRKKQLELVRGFVRQMFDSKHGHPDIDWTQYSGSIPDSFIAAFRSFTRLRDVLEIKAVEELLDGYTFDLEQREVKNEDDLVYYSACVASSVGEMCTRVLMASEPGGNRTMLKWTVERARDMGLALQLTNIARDIVTDSKQLGRSYVPRDWLTSQESALLKAGKARELGDERLRQIALKMVYTADDLNLMASRAIDYLPPSSRCGVRAACNVYTAIGVSLHKANGYPDRAHLTKLERMKVTFRCVYGFRKGHQGVQGDRGKSQAFTVI.

Positions 1 to 238 are lycopene beta-cyclase; it reads MLTYMEVHLY…LVFASCATDR (238 aa). The next 7 helical transmembrane spans lie at 7 to 27, 35 to 55, 69 to 89, 110 to 130, 142 to 162, 173 to 193, and 211 to 231; these read VHLY…KPFF, YIFL…YIVY, VIGY…LITV, PVFQ…TIAA, PFYG…LWIG, AVLF…QYAI, and LPSL…VLVF. Residues 245–602 form a phytoene synthase region; that stretch reads IYITPMNHNK…RGKSQAFTVI (358 aa).

It in the N-terminal section; belongs to the lycopene beta-cyclase family. This sequence in the C-terminal section; belongs to the phytoene/squalene synthase family.

Its subcellular location is the membrane. It carries out the reaction all-trans-lycopene = gamma-carotene. It catalyses the reaction gamma-carotene = all-trans-beta-carotene. The catalysed reaction is 2 (2E,6E,10E)-geranylgeranyl diphosphate = 15-cis-phytoene + 2 diphosphate. The protein operates within carotenoid biosynthesis; beta-carotene biosynthesis. It participates in carotenoid biosynthesis; phytoene biosynthesis; all-trans-phytoene from geranylgeranyl diphosphate: step 1/1. Functionally, bifunctional enzyme that catalyzes the reactions from geranylgeranyl diphosphate to phytoene (phytoene synthase) and lycopene to beta-carotene via the intermediate gamma-carotene (lycopene cyclase). The polypeptide is Bifunctional lycopene cyclase/phytoene synthase (Phycomyces blakesleeanus (strain ATCC 8743b / DSM 1359 / FGSC 10004 / NBRC 33097 / NRRL 1555)).